The chain runs to 412 residues: Alpha-2,8-sialyltransferase 8E (412 aa).

The Cytoplasmic portion of the chain corresponds to 1–16; that stretch reads MRYADPSANRDLLGNR. Residues 17-37 form a helical; Signal-anchor for type II membrane protein membrane-spanning segment; it reads TLLFIFICAFALVTLLQQILY. At 38 to 412 the chain is on the lumenal side; that stretch reads SKSYIKRGFQ…RVHTGTCNCC (375 aa). N-linked (GlcNAc...) asparagine glycosylation is found at asparagine 58, asparagine 64, asparagine 73, and asparagine 92. 2 cysteine pairs are disulfide-bonded: cysteine 200–cysteine 349 and cysteine 214–cysteine 409. Substrate contacts are provided by residues asparagine 228 and 250–252; that span reads NPS. A glycan (N-linked (GlcNAc...) asparagine) is linked at asparagine 277. A substrate-binding site is contributed by 336-338; that stretch reads STG. Histidine 384 functions as the Proton donor/acceptor in the catalytic mechanism.

Belongs to the glycosyltransferase 29 family. In terms of tissue distribution, highly expressed in brain. Expressed at low levels in other tissues, including liver, testis, lung, placenta and spleen.

The protein localises to the golgi apparatus membrane. The enzyme catalyses a ganglioside GT1b (d18:1(4E)) + CMP-N-acetyl-beta-neuraminate = a ganglioside GQ1b (d18:1(4E)) + CMP + H(+). The catalysed reaction is a ganglioside GD3 (d18:1(4E)) + CMP-N-acetyl-beta-neuraminate = a ganglioside GT3 (d18:1(4E)) + CMP + H(+). It carries out the reaction a ganglioside GD1a (d18:1(4E)) + CMP-N-acetyl-beta-neuraminate = a ganglioside GT1a (d18:1(4E)) + CMP + H(+). It catalyses the reaction a ganglioside GM1b (d18:1(4E)) + CMP-N-acetyl-beta-neuraminate = a ganglioside GD1c (d18:1(4E)) + CMP + H(+). The enzyme catalyses a ganglioside GQ1c (d18:1(4E)) + CMP-N-acetyl-beta-neuraminate = a ganglioside GP1c (d18:1(4E)) + CMP + H(+). It participates in protein modification; protein glycosylation. Functionally, involved in the synthesis of gangliosides GD1c, GT1a, GQ1b, GP1c and GT3 from GD1a, GT1b, GM1b and GD3 respectively. This is Alpha-2,8-sialyltransferase 8E from Mus musculus (Mouse).